Consider the following 768-residue polypeptide: Putative calcium up-regulated protein H (768 aa).

The disordered stretch occupies residues 1-22 (MINIEDISKSSNQSEEKQLKST). 2 Ricin B-type lectin domains span residues 25 to 145 (KPKY…WTTF) and 116 to 248 (QGNG…WGIN).

This sequence belongs to the cup family.

Its subcellular location is the cytoplasm. It localises to the membrane. Its function is as follows. May play an important role in stabilizing and/or regulating the cell membrane during Ca(2+) stress or certain stages of development. In Dictyostelium discoideum (Social amoeba), this protein is Putative calcium up-regulated protein H (cupH).